The following is an 801-amino-acid chain: Leucine--tRNA ligase (801 aa).

The 'HIGH' region motif lies at 39–50 (PYPSGAGIHVGH). The 'KMSKS' region signature appears at 578–582 (KMSKS). Residue Lys581 participates in ATP binding.

This sequence belongs to the class-I aminoacyl-tRNA synthetase family.

It localises to the cytoplasm. The catalysed reaction is tRNA(Leu) + L-leucine + ATP = L-leucyl-tRNA(Leu) + AMP + diphosphate. This Mesoplasma florum (strain ATCC 33453 / NBRC 100688 / NCTC 11704 / L1) (Acholeplasma florum) protein is Leucine--tRNA ligase.